The chain runs to 633 residues: Phosphomethylpyrimidine synthase (633 aa).

Substrate contacts are provided by residues Asn-245, Met-274, Tyr-303, His-339, 359 to 361, 400 to 403, and Glu-439; these read SRG and DGLR. A Zn(2+)-binding site is contributed by His-443. Position 466 (Tyr-466) interacts with substrate. His-507 provides a ligand contact to Zn(2+). [4Fe-4S] cluster is bound by residues Cys-587, Cys-590, and Cys-595.

Belongs to the ThiC family. As to quaternary structure, homodimer. It depends on [4Fe-4S] cluster as a cofactor.

The enzyme catalyses 5-amino-1-(5-phospho-beta-D-ribosyl)imidazole + S-adenosyl-L-methionine = 4-amino-2-methyl-5-(phosphooxymethyl)pyrimidine + CO + 5'-deoxyadenosine + formate + L-methionine + 3 H(+). Its pathway is cofactor biosynthesis; thiamine diphosphate biosynthesis. In terms of biological role, catalyzes the synthesis of the hydroxymethylpyrimidine phosphate (HMP-P) moiety of thiamine from aminoimidazole ribotide (AIR) in a radical S-adenosyl-L-methionine (SAM)-dependent reaction. This is Phosphomethylpyrimidine synthase from Neisseria meningitidis serogroup B (strain ATCC BAA-335 / MC58).